We begin with the raw amino-acid sequence, 178 residues long: Large ribosomal subunit protein uL5 (178 aa).

It belongs to the universal ribosomal protein uL5 family. Part of the 50S ribosomal subunit; part of the 5S rRNA/L5/L18/L25 subcomplex. Contacts the 5S rRNA and the P site tRNA. Forms a bridge to the 30S subunit in the 70S ribosome.

Its function is as follows. This is one of the proteins that bind and probably mediate the attachment of the 5S RNA into the large ribosomal subunit, where it forms part of the central protuberance. In the 70S ribosome it contacts protein S13 of the 30S subunit (bridge B1b), connecting the 2 subunits; this bridge is implicated in subunit movement. Contacts the P site tRNA; the 5S rRNA and some of its associated proteins might help stabilize positioning of ribosome-bound tRNAs. The chain is Large ribosomal subunit protein uL5 from Psychrobacter cryohalolentis (strain ATCC BAA-1226 / DSM 17306 / VKM B-2378 / K5).